The following is a 359-amino-acid chain: Heme A synthase (359 aa).

6 consecutive transmembrane segments (helical) span residues 23–43, 85–105, 109–129, 137–157, 172–192, and 212–232; these read AVAFWLWSLAVLVFLMVVLGG, YAALFPDMDLAGFKFIFFFEW, LLGRLIGVATALPLLFFWLRG, LKLLGLLALGGLQGFVGWWMV, LAIHLILASLTFCFIVWLAAS, and AGLILLAILVQIGLGALVAGL. Histidine 276 contacts heme. 3 helical membrane-spanning segments follow: residues 278-298, 308-328, and 329-349; these read MVAYLVLGLTLLQVFWTSGTL, IALLGLVLAQVILGILTLVLV, and VPLWAGLLHQAFAMLVLGMAV. Histidine 337 lines the heme pocket.

The protein belongs to the COX15/CtaA family. Type 2 subfamily. As to quaternary structure, interacts with CtaB. Heme b serves as cofactor.

The protein resides in the cell membrane. The enzyme catalyses Fe(II)-heme o + 2 A + H2O = Fe(II)-heme a + 2 AH2. Its pathway is porphyrin-containing compound metabolism; heme A biosynthesis; heme A from heme O: step 1/1. Catalyzes the conversion of heme O to heme A by two successive hydroxylations of the methyl group at C8. The first hydroxylation forms heme I, the second hydroxylation results in an unstable dihydroxymethyl group, which spontaneously dehydrates, resulting in the formyl group of heme A. The protein is Heme A synthase of Beijerinckia indica subsp. indica (strain ATCC 9039 / DSM 1715 / NCIMB 8712).